The following is a 210-amino-acid chain: Histidine biosynthesis bifunctional protein HisIE (210 aa).

Residues 1-106 are phosphoribosyl-AMP cyclohydrolase; it reads MTNYKIDFSK…SCFNTEVPFS (106 aa). Residues 107–210 are phosphoribosyl-ATP pyrophosphohydrolase; it reads VQTLAQTVQD…KGERQNIEQW (104 aa).

In the N-terminal section; belongs to the PRA-CH family. The protein in the C-terminal section; belongs to the PRA-PH family.

The protein localises to the cytoplasm. It catalyses the reaction 1-(5-phospho-beta-D-ribosyl)-ATP + H2O = 1-(5-phospho-beta-D-ribosyl)-5'-AMP + diphosphate + H(+). It carries out the reaction 1-(5-phospho-beta-D-ribosyl)-5'-AMP + H2O = 1-(5-phospho-beta-D-ribosyl)-5-[(5-phospho-beta-D-ribosylamino)methylideneamino]imidazole-4-carboxamide. It participates in amino-acid biosynthesis; L-histidine biosynthesis; L-histidine from 5-phospho-alpha-D-ribose 1-diphosphate: step 2/9. The protein operates within amino-acid biosynthesis; L-histidine biosynthesis; L-histidine from 5-phospho-alpha-D-ribose 1-diphosphate: step 3/9. This Staphylococcus aureus (strain COL) protein is Histidine biosynthesis bifunctional protein HisIE (hisI).